Here is a 113-residue protein sequence, read N- to C-terminus: uncharacterized protein (113 aa).

Residues 16–96 (LVDNETRCFH…STVHCKYCNH (81 aa)) form a CHY-type; degenerate zinc finger. 8 residues coordinate Zn(2+): cysteine 23, histidine 25, cysteine 46, cysteine 49, cysteine 73, cysteine 76, cysteine 91, and cysteine 94.

The protein localises to the cytoplasm. It localises to the nucleus. This is an uncharacterized protein from Schizosaccharomyces pombe (strain 972 / ATCC 24843) (Fission yeast).